The chain runs to 525 residues: MLECLSALLVLFAGGGGSVLAAVQSKTVADPNLCPGYNSQLISPFLSSCKRNLSECVSRYFDEQYAFCRSCVTVNNETMEDLDNCKCLQCALSSLNNSCFHDYCTSKDEYDKLQIVVEQFQLTNGVLDDGEILKPRGNKFSSRKLSYFVGQNNTLFRNPLQFEKNQLISALLTSLTNNQKTISSVDMFEVVDANNEVQYLRKRTISGKTLSPATGYEEENDGDCSVKDKKWEGKIEYHENKKVSSENCSKDTDDKSGSKKERNTKAPLFHTATEIHMTRWSSWRPKKIFTRYLVNEYQSPKIITTVNRFYRTKTDTETGTTLITSTKAKRRWFPRTKIVTSTATSTFLSITTTTTTNAIATKSLVAVLNPDGLNKKAGINFGLFSANGELASPDEGGTPTVVRRDKISDPGAANEQATLFSTTFSQVPHLPELDSGEFISAASQLDKRIFIFTAITVSITTLMMLGFSYRSRVSFRDHSIDDSDDDNDWSDDEVEFDEEYFYSLPVSIPEKGISLDKMAQQLGVE.

The first 21 residues, methionine 1–alanine 21, serve as a signal peptide directing secretion. The Extracellular portion of the chain corresponds to alanine 22 to arginine 448. The interval lysine 242–threonine 264 is disordered. The helical transmembrane segment at isoleucine 449–tyrosine 469 threads the bilayer. The Cytoplasmic segment spans residues arginine 470–glutamate 525.

It localises to the membrane. This is an uncharacterized protein from Saccharomyces cerevisiae (strain YJM789) (Baker's yeast).